Reading from the N-terminus, the 1793-residue chain is Brefeldin A-inhibited guanine nucleotide-exchange protein 2 (1793 aa).

A2 is modified (N-acetylalanine). 3 disordered regions span residues 45–71, 266–299, and 579–606; these read NSLQ…PGPL, TMSG…LLDS, and GSPQ…GGTS. Residues 55 to 66 show a composition bias toward low complexity; the sequence is SSAATDSESESS. The span at 270–281 shows a compositional bias: gly residues; the sequence is SGSGSGSGGQDG. Polar residues-rich tracts occupy residues 284-294 and 594-605; these read GTTTVETTNPT and GSDTYSESSGGT. A Phosphoserine modification is found at S595. Residues 610–797 enclose the SEC7 domain; sequence AIEQRRAYKL…RSLYERITKH (188 aa). E712 is a catalytic residue. The span at 1311–1327 shows a compositional bias: polar residues; it reads NKYKGTSGKIPQSSLHS. The tract at residues 1311-1333 is disordered; sequence NKYKGTSGKIPQSSLHSGKSGKQ.

As to quaternary structure, homodimer.

It localises to the cytoplasm. The protein localises to the cytosol. The protein resides in the membrane. Its activity is regulated as follows. Inhibited by brefeldin A. In terms of biological role, activates the ARF proteins by exchanging bound GDP for free GTP. Plays a role in vesicular protein sorting. This is Brefeldin A-inhibited guanine nucleotide-exchange protein 2 (BIG2) from Arabidopsis thaliana (Mouse-ear cress).